We begin with the raw amino-acid sequence, 491 residues long: Galactose-1-phosphate uridylyltransferase (491 aa).

It belongs to the galactose-1-phosphate uridylyltransferase type 2 family.

It localises to the cytoplasm. It carries out the reaction alpha-D-galactose 1-phosphate + UDP-alpha-D-glucose = alpha-D-glucose 1-phosphate + UDP-alpha-D-galactose. Its pathway is carbohydrate metabolism; galactose metabolism. The protein is Galactose-1-phosphate uridylyltransferase (galT) of Streptococcus mutans serotype c (strain ATCC 700610 / UA159).